Consider the following 87-residue polypeptide: Small ribosomal subunit protein bS16 (87 aa).

Belongs to the bacterial ribosomal protein bS16 family.

This Onion yellows phytoplasma (strain OY-M) protein is Small ribosomal subunit protein bS16.